A 173-amino-acid chain; its full sequence is Ribosome maturation factor RimM (173 aa).

The PRC barrel domain occupies 92 to 165 (EDEYYHTDLI…RVVVALPQEI (74 aa)).

This sequence belongs to the RimM family. In terms of assembly, binds ribosomal protein uS19.

It is found in the cytoplasm. In terms of biological role, an accessory protein needed during the final step in the assembly of 30S ribosomal subunit, possibly for assembly of the head region. Essential for efficient processing of 16S rRNA. May be needed both before and after RbfA during the maturation of 16S rRNA. It has affinity for free ribosomal 30S subunits but not for 70S ribosomes. In Bradyrhizobium diazoefficiens (strain JCM 10833 / BCRC 13528 / IAM 13628 / NBRC 14792 / USDA 110), this protein is Ribosome maturation factor RimM.